We begin with the raw amino-acid sequence, 361 residues long: Peptide chain release factor 1 (361 aa).

Gln237 carries the N5-methylglutamine modification.

Belongs to the prokaryotic/mitochondrial release factor family. In terms of processing, methylated by PrmC. Methylation increases the termination efficiency of RF1.

The protein resides in the cytoplasm. In terms of biological role, peptide chain release factor 1 directs the termination of translation in response to the peptide chain termination codons UAG and UAA. The protein is Peptide chain release factor 1 of Thioalkalivibrio sulfidiphilus (strain HL-EbGR7).